The sequence spans 499 residues: Pleckstrin homology domain-containing family O member 2 (499 aa).

Residues 1 to 11 are compositionally biased toward basic and acidic residues; that stretch reads MEEEGVKEGGQ. The segment at 1–21 is disordered; that stretch reads MEEEGVKEGGQRPRSAQTADK. The PH domain maps to 18 to 119; it reads TADKAGWIKK…WIKALNEGIN (102 aa). Ser167 carries the post-translational modification Phosphoserine. The disordered stretch occupies residues 170–419; that stretch reads LSRLDLDVPD…RRRQPGEQLH (250 aa). Over residues 201-212 the composition is skewed to pro residues; sequence RPPMPPAKPSPA. Low complexity predominate over residues 229-238; it reads SAPAPVPASS. A phosphoserine mark is found at Ser237 and Ser238. Acidic residues predominate over residues 246–258; the sequence is EDLETPVVEDSDS. Phosphoserine is present on Ser273. 2 positions are modified to phosphothreonine: Thr298 and Thr311. 2 stretches are compositionally biased toward low complexity: residues 329–349 and 367–386; these read EASGPAQSPGASEASAPGPAE and AAGPPGTPPKAATTSTTLPP. Ser399 bears the Phosphoserine mark. Residues 416-492 adopt a coiled-coil conformation; it reads EQLHRAQLEV…LREKRRELVT (77 aa).

The chain is Pleckstrin homology domain-containing family O member 2 (PLEKHO2) from Bos taurus (Bovine).